Reading from the N-terminus, the 130-residue chain is Small ribosomal subunit protein uS9 (130 aa).

The protein belongs to the universal ribosomal protein uS9 family.

The protein is Small ribosomal subunit protein uS9 of Verminephrobacter eiseniae (strain EF01-2).